The sequence spans 191 residues: Ion-translocating oxidoreductase complex subunit B (191 aa).

Residues 1–26 (MSAIWIAIAVLSALSLVFGGLLGYAS) form a hydrophobic region. The 4Fe-4S domain maps to 32-91 (EEDPIVEQIDAILPQSQCGQCGYPGCRPYADAVGNNGEMINKCAPGGEQTMLKLAALLNV). Cys-49, Cys-52, Cys-57, Cys-74, Cys-116, Cys-119, Cys-122, Cys-126, Cys-146, Cys-149, Cys-152, and Cys-156 together coordinate [4Fe-4S] cluster. 2 4Fe-4S ferredoxin-type domains span residues 107–136 (KVAW…GATR) and 137–166 (AMHT…MRPV).

Belongs to the 4Fe4S bacterial-type ferredoxin family. RnfB subfamily. As to quaternary structure, the complex is composed of six subunits: RnfA, RnfB, RnfC, RnfD, RnfE and RnfG. [4Fe-4S] cluster serves as cofactor.

The protein localises to the cell inner membrane. In terms of biological role, part of a membrane-bound complex that couples electron transfer with translocation of ions across the membrane. The chain is Ion-translocating oxidoreductase complex subunit B from Erwinia tasmaniensis (strain DSM 17950 / CFBP 7177 / CIP 109463 / NCPPB 4357 / Et1/99).